Reading from the N-terminus, the 1014-residue chain is MFKAVNPRQNFPQMEEEILKIWQDKGIFKKSIENRRDGKRFTLYEGPPTANGRPGIHHVLSRVFKDVIPRYKVMKGYYAPRIGGWDTHGLPVELEVEKELGFTSKNDIEKYGIAEFNTRCRSSVFKYVSEWNKLTERIAYWVDLDNAYITMDNKYIESGWWALKQMWDKGLVYQGHRVTPHCPRCGTSLSSHEVAQGYKDNTEDPSVFVKFEINHESLAQTGLGQKWVNPSDKPLYLLAWTTTPWTLPANTALAVSATDEYAILDMADYYMVLAKPRLSSLKLTENPIVGECLGSDLKGLTYKPLFDPREFGISVKNMQDNSEIDALEPLSYPVITTSYVSMDDGTGIVHTAPAYGELDYESGVKYGLKFVHHVDLQGRITGNYPFAGKFVKEADKDISRNLKERGLMFRNERMHHTYPFCWRCDSPLIYYAKQSWYIRTTAVRDELIKGNQQINWYPEHIKDGRFGDWLENNIDWAFSRERYWGTPVPIWRCEKCGQTECVGGIDELKAKPNFKGMQEKLDIHRPYADEWTYDCAKCGGNMKRVTEVMDCWYDSGAMPVAQYHYPFEPESRTIASDGRFPADYICEAVDQTRGWFYSLHAISTLIFGRPCYQNVICLGHILDERGEKMSKSKNNVIQPAAVLDKYGADAVRWYFYTAAPPGNARRFSEKLVGEVTRQFLLMLWNIYSFFVTYANIDNFTPSEKYLAGEVPELDRWILSELNQLVLDVDKGLDNYDPTQAGRRIEDFVGYLSNWYVRRSRRRFWKSENDADKLSAYQALYTCLVTLSKLLAPFTPFVAEELYQNLVLLVDQSALESVHLTDFPVADKALIDEQLDNEIRLVMKVSSMGRSARSKAALKVRQPLAEVRVVLSSPAERTGLMRLAEQVLEELNVKALVAEEPGTAIPQENYVASTEGAYTVAVYTGLSPELLAEGSAREIVHRLQTMRKSAEFEIADYINTHYQADEYLESVIRTHAEYIKKETLSNQIVNGNAPEGAYTESLDIDGHPLSLWVVR.

The 'HIGH' region motif lies at 48–58 (PTANGRPGIHH). The 'KMSKS' region motif lies at 628–632 (KMSKS). ATP is bound at residue K631.

Belongs to the class-I aminoacyl-tRNA synthetase family. IleS type 2 subfamily. As to quaternary structure, monomer. Zn(2+) is required as a cofactor.

The protein localises to the cytoplasm. The catalysed reaction is tRNA(Ile) + L-isoleucine + ATP = L-isoleucyl-tRNA(Ile) + AMP + diphosphate. Its function is as follows. Catalyzes the attachment of isoleucine to tRNA(Ile). As IleRS can inadvertently accommodate and process structurally similar amino acids such as valine, to avoid such errors it has two additional distinct tRNA(Ile)-dependent editing activities. One activity is designated as 'pretransfer' editing and involves the hydrolysis of activated Val-AMP. The other activity is designated 'posttransfer' editing and involves deacylation of mischarged Val-tRNA(Ile). The chain is Isoleucine--tRNA ligase from Dehalococcoides mccartyi (strain CBDB1).